A 316-amino-acid chain; its full sequence is Olfactory receptor 52A5 (316 aa).

Over Met-1 to Cys-27 the chain is Extracellular. An N-linked (GlcNAc...) asparagine glycan is attached at Asn-5. A helical membrane pass occupies residues Trp-28–Leu-48. At Val-49–Ser-56 the chain is on the cytoplasmic side. A helical transmembrane segment spans residues Leu-57 to Thr-77. At Cys-78–Phe-101 the chain is on the extracellular side. A helical membrane pass occupies residues Gln-102–Leu-122. The Cytoplasmic portion of the chain corresponds to Asp-123–Gln-141. The helical transmembrane segment at Phe-142–Leu-162 threads the bilayer. Residues Gly-163–Lys-199 lie on the Extracellular side of the membrane. A helical transmembrane segment spans residues Ile-200–Ser-220. Residues Tyr-221 to Ala-240 are Cytoplasmic-facing. Residues Phe-241–Ser-261 form a helical membrane-spanning segment. At Phe-262–His-276 the chain is on the extracellular side. The helical transmembrane segment at Ile-277–Val-297 threads the bilayer. At Lys-298 to Thr-316 the chain is on the cytoplasmic side.

The protein belongs to the G-protein coupled receptor 1 family.

The protein localises to the cell membrane. In terms of biological role, odorant receptor. The chain is Olfactory receptor 52A5 (OR52A5) from Homo sapiens (Human).